Here is a 325-residue protein sequence, read N- to C-terminus: AFLMTKDAEISIEVSPRYINGDYFLRGRKLGFNRISFGVQDFDPQVQLAVNRVQRETMFFQVMEWIRAAEFESVNIDLIYGLPYQTVQSFEATIAKTLRLDPDRIAVFNFAYLPNLKPIQKRIDPTTLPDSATKLTILQRVIERLTSQGYRYIGMDHFAKPTDELAIAQRSGDLKRNFQGYTTLPTADLIGFGLTSISMLQAAYAQNQKHLATYFSDVAAGHHGPQECGFNCTVEDLLRRTIIMELMCQFSLDKGAIARQFNLDFDAYFASELAALRELAADGLLHLGRDRLEVTPVGRLLIRNITAVFDAYLQQKSGRTFSKAI.

In terms of domain architecture, Radical SAM core spans 1-151; that stretch reads AFLMTKDAEI…IERLTSQGYR (151 aa). Positions 13, 40, 52, 77, 111, and 197 each coordinate S-adenosyl-L-methionine.

It belongs to the anaerobic coproporphyrinogen-III oxidase family. Monomer. It depends on [4Fe-4S] cluster as a cofactor.

The protein resides in the cytoplasm. The enzyme catalyses coproporphyrinogen III + 2 S-adenosyl-L-methionine = protoporphyrinogen IX + 2 5'-deoxyadenosine + 2 L-methionine + 2 CO2. The protein operates within porphyrin-containing compound metabolism; protoporphyrin-IX biosynthesis; protoporphyrinogen-IX from coproporphyrinogen-III (AdoMet route): step 1/1. Functionally, involved in the heme and chlorophyll biosynthesis. Catalyzes the anaerobic oxidative decarboxylation of propionate groups of rings A and B of coproporphyrinogen III to yield the vinyl groups in protoporphyrinogen IX. In Thermostichus vulcanus (Synechococcus vulcanus), this protein is Oxygen-independent coproporphyrinogen III oxidase (hemN).